The sequence spans 378 residues: tRNA (guanine(37)-N(1))-methyltransferase (378 aa).

Residues His-196, 234 to 235 (DL), 262 to 263 (DA), and Asn-282 contribute to the S-adenosyl-L-methionine site.

The protein belongs to the class I-like SAM-binding methyltransferase superfamily. TRM5/TYW2 family. In terms of assembly, monomer.

The protein resides in the mitochondrion matrix. It localises to the nucleus. The protein localises to the cytoplasm. The enzyme catalyses guanosine(37) in tRNA + S-adenosyl-L-methionine = N(1)-methylguanosine(37) in tRNA + S-adenosyl-L-homocysteine + H(+). Its function is as follows. Specifically methylates the N1 position of guanosine-37 in various cytoplasmic and mitochondrial tRNAs. Methylation is not dependent on the nature of the nucleoside 5' of the target nucleoside. This is the first step in the biosynthesis of wybutosine (yW), a modified base adjacent to the anticodon of tRNAs and required for accurate decoding. The sequence is that of tRNA (guanine(37)-N(1))-methyltransferase from Trichomonas vaginalis (strain ATCC PRA-98 / G3).